A 158-amino-acid polypeptide reads, in one-letter code: DNA-binding transcriptional repressor RacR (158 aa).

Homooctamer.

In terms of biological role, transcriptional regulator that represses the expression of ydaS and ydaT under normal physiological conditions. It binds to its own upstream sequence and represses the adjacent and divergently coded ydaS-ydaT operon. RacR-mediated down-regulation of ydaS and ydaT may be critical for cell survival. RacR ensures that the prophage DNA is maintained in the genome. When the expression of the racR gene is reduced, the prophage Rac is excised from the genome, possibly to counteract the lethal toxicity of YdaT. This chain is DNA-binding transcriptional repressor RacR (racR), found in Escherichia coli (strain K12).